The following is a 314-amino-acid chain: UDP-N-acetylenolpyruvoylglucosamine reductase (314 aa).

One can recognise an FAD-binding PCMH-type domain in the interval 31–208 (RIGGPADYYA…LSARFRLTPK (178 aa)). Residue arginine 187 is part of the active site. The active-site Proton donor is serine 237. Residue glutamate 307 is part of the active site.

Belongs to the MurB family. It depends on FAD as a cofactor.

It is found in the cytoplasm. The catalysed reaction is UDP-N-acetyl-alpha-D-muramate + NADP(+) = UDP-N-acetyl-3-O-(1-carboxyvinyl)-alpha-D-glucosamine + NADPH + H(+). The protein operates within cell wall biogenesis; peptidoglycan biosynthesis. Cell wall formation. The sequence is that of UDP-N-acetylenolpyruvoylglucosamine reductase from Agathobacter rectalis (strain ATCC 33656 / DSM 3377 / JCM 17463 / KCTC 5835 / VPI 0990) (Eubacterium rectale).